Consider the following 92-residue polypeptide: RNA-binding protein Hfq (92 aa).

The Sm domain maps to 9–68 (DPFLNALRRERVPVSIYLVNGIKLQGQVESFDQFVILLKNTVSQMVYKHAISTVVPSRPF).

This sequence belongs to the Hfq family. In terms of assembly, homohexamer.

Its function is as follows. RNA chaperone that binds small regulatory RNA (sRNAs) and mRNAs to facilitate mRNA translational regulation in response to envelope stress, environmental stress and changes in metabolite concentrations. Also binds with high specificity to tRNAs. In Shewanella piezotolerans (strain WP3 / JCM 13877), this protein is RNA-binding protein Hfq.